The chain runs to 164 residues: Ribosome maturation factor RimP (164 aa).

This sequence belongs to the RimP family.

It is found in the cytoplasm. Functionally, required for maturation of 30S ribosomal subunits. The protein is Ribosome maturation factor RimP of Mesoplasma florum (strain ATCC 33453 / NBRC 100688 / NCTC 11704 / L1) (Acholeplasma florum).